The sequence spans 463 residues: Asparagine--tRNA ligase (463 aa).

Belongs to the class-II aminoacyl-tRNA synthetase family. As to quaternary structure, homodimer.

The protein resides in the cytoplasm. The catalysed reaction is tRNA(Asn) + L-asparagine + ATP = L-asparaginyl-tRNA(Asn) + AMP + diphosphate + H(+). The protein is Asparagine--tRNA ligase of Clostridium tetani (strain Massachusetts / E88).